The following is a 600-amino-acid chain: Nisin transport ATP-binding protein NisT (600 aa).

The next 5 helical transmembrane spans lie at 34–54 (AIYL…SLFI), 69–89 (LINI…LGQL), 147–167 (AIIV…FIGT), 168–188 (WNIG…VLFL), and 260–280 (IFLD…MILS). Residues 34–317 (AIYLIVLNAI…MIQNIYIIYN (284 aa)) enclose the ABC transmembrane type-1 domain. Residues 352 to 592 (VKVINLSYVY…CQYYQELYYS (241 aa)) form the ABC transporter domain. Residue 386–393 (GKNGSGKS) participates in ATP binding.

Belongs to the ABC transporter superfamily. Nisin exporter (TC 3.A.1.111.3) family.

It localises to the cell membrane. In terms of biological role, probably implicated in the export process of the lantibiotic nisin. This is Nisin transport ATP-binding protein NisT (nisT) from Lactococcus lactis subsp. lactis (Streptococcus lactis).